The primary structure comprises 1700 residues: A-kinase anchor protein SPHKAP (1700 aa).

Disordered stretches follow at residues 364 to 385 (SNLN…QDGE), 742 to 778 (IRRR…SNSH), and 793 to 885 (SKQD…NTQE). A compositionally biased stretch (low complexity) spans 768-778 (SSSSSPLSNSH). Over residues 822–831 (DSSTATTSSK) the composition is skewed to polar residues. The segment covering 839-855 (AGEDTKSPHHSENECRA) has biased composition (basic and acidic residues). Residues 857–873 (SEGQRSPTVSQSRSGSQ) are compositionally biased toward polar residues. Residues 929–946 (FAEELADTVVSMATEIAA) are PKA-RII subunit binding domain. Residues 980–1006 (KRKKESQGSGTAVRKHKPPRLSEIKRK) form a disordered region. Residues S1025, S1085, S1107, S1120, S1121, S1124, S1259, and S1288 each carry the phosphoserine modification. Disordered regions lie at residues 1374–1414 (DSVT…PVPI), 1481–1535 (IHSD…DTSS), and 1585–1604 (GQSE…TASP). A compositionally biased stretch (polar residues) spans 1383–1398 (PVSSLSKTASLTNHSP). Positions 1586–1604 (QSESTEAPASGPPTGTASP) are enriched in polar residues.

The protein belongs to the AKAP110 family. As to quaternary structure, interacts (via the PKA-RII subunit binding domain) with the RI subunit of PKA. Interacts with SPHK1; the interaction greatly reduces SPHK1 activity. Highly expressed in heart. Both isoforms abundantly expressed in ventricle. Also expressed in spleen, ovary and brain.

The protein resides in the cytoplasm. Anchoring protein that binds preferentially to the type I regulatory subunit of c-AMP-dependent protein kinase (PKA type I) and targets it to distinct subcellular compartments. May act as a converging factor linking cAMP and sphingosine signaling pathways. Plays a regulatory role in the modulation of SPHK1. This Homo sapiens (Human) protein is A-kinase anchor protein SPHKAP (SPHKAP).